The sequence spans 505 residues: Glycerol kinase (505 aa).

Position 12 (T12) interacts with ADP. T12, T13, and S14 together coordinate ATP. Residue T12 coordinates sn-glycerol 3-phosphate. Residue R16 coordinates ADP. Sn-glycerol 3-phosphate is bound by residues R82, E83, Y134, and D249. Residues R82, E83, Y134, D249, and Q250 each coordinate glycerol. 2 residues coordinate ADP: T271 and G315. 4 residues coordinate ATP: T271, G315, Q319, and G416. ADP-binding residues include G416 and N420.

The protein belongs to the FGGY kinase family.

The catalysed reaction is glycerol + ATP = sn-glycerol 3-phosphate + ADP + H(+). It functions in the pathway polyol metabolism; glycerol degradation via glycerol kinase pathway; sn-glycerol 3-phosphate from glycerol: step 1/1. With respect to regulation, inhibited by fructose 1,6-bisphosphate (FBP). Functionally, key enzyme in the regulation of glycerol uptake and metabolism. Catalyzes the phosphorylation of glycerol to yield sn-glycerol 3-phosphate. The polypeptide is Glycerol kinase (Mycolicibacterium gilvum (strain PYR-GCK) (Mycobacterium gilvum (strain PYR-GCK))).